A 264-amino-acid polypeptide reads, in one-letter code: ATP synthase subunit a (264 aa).

The next 7 helical transmembrane spans lie at 29 to 49, 90 to 110, 111 to 131, 134 to 154, 177 to 197, 208 to 228, and 235 to 255; these read TWHI…LWIF, IAPL…MDMI, PVDW…KVVP, DVNI…YYSI, IPVN…SLAL, LIFI…TLGV, and LIFH…LTIV.

Belongs to the ATPase A chain family. As to quaternary structure, F-type ATPases have 2 components, CF(1) - the catalytic core - and CF(0) - the membrane proton channel. CF(1) has five subunits: alpha(3), beta(3), gamma(1), delta(1), epsilon(1). CF(0) has three main subunits: a(1), b(2) and c(9-12). The alpha and beta chains form an alternating ring which encloses part of the gamma chain. CF(1) is attached to CF(0) by a central stalk formed by the gamma and epsilon chains, while a peripheral stalk is formed by the delta and b chains.

It localises to the cell inner membrane. Its function is as follows. Key component of the proton channel; it plays a direct role in the translocation of protons across the membrane. The protein is ATP synthase subunit a of Shewanella denitrificans (strain OS217 / ATCC BAA-1090 / DSM 15013).